Here is a 342-residue protein sequence, read N- to C-terminus: MLPFEFEFNTTSSPECDVCLDPQKLFVKLFKRTIVLLSGPTGSGKTDVSLALAPMIDGEIVSVDSMQVYQGMDIGTAKVSLKARQEIPHHLIDIRHVQEPFNVVDFYYEAIQACQNILSRNKVPILVGGSGFYFHAFLSGPPKGPAADPQIREQLEAIAEEHGVSALYEDLLLKDPEYAQTITKNDKNKIIRGLEIIQLTGKKVSDHEWDIVPKASREYCCRAWFLSPETEFLKNNIQMRCEAMLQEGLLEEVRGLLNQGIRENPSAFKAIGYREWIEFLDNGEKLEEYEETKRKFVSNSWHYTKKQKTWFKRYSIFRELPTLGLSSDAIAQKIAKDYLLYS.

An ATP-binding site is contributed by 39 to 46; that stretch reads GPTGSGKT. A substrate-binding site is contributed by 41–46; the sequence is TGSGKT. The segment at 64-67 is interaction with substrate tRNA; that stretch reads DSMQ.

Belongs to the IPP transferase family. In terms of assembly, monomer. The cofactor is Mg(2+).

It catalyses the reaction adenosine(37) in tRNA + dimethylallyl diphosphate = N(6)-dimethylallyladenosine(37) in tRNA + diphosphate. Functionally, catalyzes the transfer of a dimethylallyl group onto the adenine at position 37 in tRNAs that read codons beginning with uridine, leading to the formation of N6-(dimethylallyl)adenosine (i(6)A). In Chlamydia pneumoniae (Chlamydophila pneumoniae), this protein is tRNA dimethylallyltransferase.